Here is a 124-residue protein sequence, read N- to C-terminus: Seripauperin-15 (124 aa).

The N-terminal stretch at 1-20 is a signal peptide; the sequence is MVKLTSIAAGVAAIAAGVAA.

The protein belongs to the SRP1/TIP1 family. Seripauperin subfamily.

The protein is Seripauperin-15 (PAU15) of Saccharomyces cerevisiae (strain ATCC 204508 / S288c) (Baker's yeast).